Here is a 260-residue protein sequence, read N- to C-terminus: Voltage-dependent calcium channel gamma-6 subunit (260 aa).

The interval 14-33 (RRGAAGRRRAHGQGRSGLTP) is disordered. The span at 15-25 (RGAAGRRRAHG) shows a compositional bias: basic residues. The next 4 membrane-spanning stretches (helical) occupy residues 43–63 (LLLA…EFWV), 143–163 (VIAV…IMVL), 169–189 (FLLR…LVSL), and 221–241 (LGCG…FLLL).

It belongs to the PMP-22/EMP/MP20 family. CACNG subfamily. As to quaternary structure, interacts with CACNA1C. Identified in a complex with the L-type calcium channel subunits CACNA1C, CACNA2D1 and either CACNB1 or CACNB2. In terms of tissue distribution, detected in heart left ventricle.

The protein localises to the cell membrane. In terms of biological role, regulates the activity of L-type calcium channels that contain CACNA1C as pore-forming subunit. The polypeptide is Voltage-dependent calcium channel gamma-6 subunit (CACNG6) (Homo sapiens (Human)).